A 289-amino-acid polypeptide reads, in one-letter code: Probable signal peptidase I (289 aa).

Residues 1–53 (MTETTDSVPEPPSDADQLQPKVSICGLDMPAEVSETAAEAAIGVSEPKKRSAL) are Cytoplasmic-facing. A helical transmembrane segment spans residues 54-74 (WEFAILAVIAIGLYYVMLTFV). Residues 75 to 289 (ARPYLIPSES…VGSVNSQQGQ (215 aa)) lie on the Extracellular side of the membrane. Catalysis depends on residues S84 and K162.

Belongs to the peptidase S26 family.

The protein resides in the cell membrane. It carries out the reaction Cleavage of hydrophobic, N-terminal signal or leader sequences from secreted and periplasmic proteins.. This chain is Probable signal peptidase I (lepB), found in Mycobacterium leprae (strain TN).